A 245-amino-acid chain; its full sequence is Carbohydrate deacetylase (245 aa).

Mg(2+) contacts are provided by H59 and H125.

The protein belongs to the YdjC deacetylase family. Homodimer. Mg(2+) is required as a cofactor.

Functionally, probably catalyzes the deacetylation of acetylated carbohydrates an important step in the degradation of oligosaccharides. The sequence is that of Carbohydrate deacetylase from Listeria monocytogenes serotype 4a (strain HCC23).